The following is a 431-amino-acid chain: Tryptophan--tRNA ligase (431 aa).

ATP is bound by residues 12–14 (TPS) and 20–21 (GN). Positions 13–21 (PSGTPHLGN) match the 'HIGH' region motif. Asp-145 contacts L-tryptophan. ATP contacts are provided by residues 157-159 (GRD), Leu-197, and 204-208 (KMSKS). A 'KMSKS' region motif is present at residues 204-208 (KMSKS).

Belongs to the class-I aminoacyl-tRNA synthetase family. As to quaternary structure, homodimer.

It is found in the cytoplasm. The enzyme catalyses tRNA(Trp) + L-tryptophan + ATP = L-tryptophyl-tRNA(Trp) + AMP + diphosphate + H(+). Functionally, catalyzes the attachment of tryptophan to tRNA(Trp). The chain is Tryptophan--tRNA ligase from Xanthomonas campestris pv. campestris (strain ATCC 33913 / DSM 3586 / NCPPB 528 / LMG 568 / P 25).